Here is a 93-residue protein sequence, read N- to C-terminus: Small ribosomal subunit protein uS19 (93 aa).

Belongs to the universal ribosomal protein uS19 family.

In terms of biological role, protein S19 forms a complex with S13 that binds strongly to the 16S ribosomal RNA. This chain is Small ribosomal subunit protein uS19, found in Syntrophus aciditrophicus (strain SB).